Consider the following 231-residue polypeptide: MDDPSATLLPEHSEDLRLARDAELKKVLKLKLVLDELRRLDVGPNPSDEIKRALKLVSIGSYARLGEMEGAGQEQVLGLPSGSSFPPLNYTDRKTVRTKLSAQLRTTLQPIAELCDRIREEFPDAFGQEADLSCDQKEILRLEEEHRSGLEKLVALLTRKCTLLKETAELKLGPQLANELKLQQAQAQLVQTKAELLRGFFVHEAASRTEHSVKAHKEVEAHLDELLAAKK.

Residues 128 to 199 adopt a coiled-coil conformation; sequence QEADLSCDQK…VQTKAELLRG (72 aa).

Component of the augmin complex composed of dgt2, dgt3, dgt4, dgt5, dgt6, msd1, msd5 and wac. The complex interacts directly or indirectly with microtubules and is required for centrosome-independent generation of spindle microtubules. dgt2 interacts directly with wac (via coiled coil). In adult females, detected only in the abdomen with no expression in the head or thorax (at protein level).

It localises to the cytoplasm. It is found in the cytoskeleton. The protein resides in the spindle. The protein localises to the spindle pole. In terms of biological role, as part of the augmin complex, plays a role in centrosome-independent generation of spindle microtubules. The complex is required for mitotic spindle assembly through its involvement in localizing gamma-tubulin to spindle microtubules. dgt2 binds to microtubules in vitro. The sequence is that of Augmin complex subunit dgt2 from Drosophila melanogaster (Fruit fly).